Reading from the N-terminus, the 177-residue chain is ATP synthase subunit delta (177 aa).

It belongs to the ATPase delta chain family. In terms of assembly, F-type ATPases have 2 components, F(1) - the catalytic core - and F(0) - the membrane proton channel. F(1) has five subunits: alpha(3), beta(3), gamma(1), delta(1), epsilon(1). F(0) has three main subunits: a(1), b(2) and c(10-14). The alpha and beta chains form an alternating ring which encloses part of the gamma chain. F(1) is attached to F(0) by a central stalk formed by the gamma and epsilon chains, while a peripheral stalk is formed by the delta and b chains.

Its subcellular location is the cell inner membrane. Its function is as follows. F(1)F(0) ATP synthase produces ATP from ADP in the presence of a proton or sodium gradient. F-type ATPases consist of two structural domains, F(1) containing the extramembraneous catalytic core and F(0) containing the membrane proton channel, linked together by a central stalk and a peripheral stalk. During catalysis, ATP synthesis in the catalytic domain of F(1) is coupled via a rotary mechanism of the central stalk subunits to proton translocation. In terms of biological role, this protein is part of the stalk that links CF(0) to CF(1). It either transmits conformational changes from CF(0) to CF(1) or is implicated in proton conduction. This Klebsiella pneumoniae (strain 342) protein is ATP synthase subunit delta.